The sequence spans 259 residues: MGLLSNRIDRSSLKPGDHIYSWRTAYIYAHHGIYVGDDRVIHFTRRGQEVGTGTVLDLILVSSGPSRNHTHCPTCVPPNEGHGVVSSCLNCFLAGGVLYRFEYSVNAAHFLVKARGGTCTLAVADPNEIVVHRAKHLLQNGFGCYDVFKNNCEDFAIYCKTALLVLEGRTMGQSGQAVSIIGGPIAAVLSTPMRLLTTNVYGMAATAIGVYCASRYATDIGMRADVAKVEAEDLTRRLSSGLFQVLDPPLAAIALPSTS.

One can recognise an LRAT domain in the interval 20 to 168 (YSWRTAYIYA…CKTALLVLEG (149 aa)). Active-site residues include His-30 and His-42. Cys-152 (acyl-thioester intermediate) is an active-site residue.

As to expression, highly expressed in inflorescences, siliques and stems, and, to a lower extent, in roots and leaves.

The protein localises to the cytoplasm. Its function is as follows. Confers tolerance to lead ions (Pb) stress mediated by Pb(NO(3))(2) probably by promoting Pb accumulation leading to subsequent glutathione-dependent phytochelatin (PC) synthesis and related gene expression, including PDR12/ABCG40, GSH1, GSH2, GR1, GR2, PCS1 and PCS2. The protein is Protein LEAD-SENSITIVE 1 of Arabidopsis thaliana (Mouse-ear cress).